The sequence spans 576 residues: Sulfite reductase [NADPH] hemoprotein beta-component (576 aa).

Over residues 1-12 the composition is skewed to basic and acidic residues; sequence MNVKTEPDRSRD. Residues 1-25 form a disordered region; it reads MNVKTEPDRSRDVSQPLDKLGPDET. [4Fe-4S] cluster contacts are provided by Cys441, Cys447, Cys486, and Cys490. Cys490 contacts siroheme.

Belongs to the nitrite and sulfite reductase 4Fe-4S domain family. As to quaternary structure, alpha(8)-beta(8). The alpha component is a flavoprotein, the beta component is a hemoprotein. The cofactor is siroheme. It depends on [4Fe-4S] cluster as a cofactor.

It catalyses the reaction hydrogen sulfide + 3 NADP(+) + 3 H2O = sulfite + 3 NADPH + 4 H(+). The protein operates within sulfur metabolism; hydrogen sulfide biosynthesis; hydrogen sulfide from sulfite (NADPH route): step 1/1. In terms of biological role, component of the sulfite reductase complex that catalyzes the 6-electron reduction of sulfite to sulfide. This is one of several activities required for the biosynthesis of L-cysteine from sulfate. The sequence is that of Sulfite reductase [NADPH] hemoprotein beta-component from Nitrobacter hamburgensis (strain DSM 10229 / NCIMB 13809 / X14).